A 123-amino-acid chain; its full sequence is Putative membrane protein insertion efficiency factor (123 aa).

This sequence belongs to the UPF0161 family.

Its subcellular location is the cell inner membrane. Functionally, could be involved in insertion of integral membrane proteins into the membrane. This Beijerinckia indica subsp. indica (strain ATCC 9039 / DSM 1715 / NCIMB 8712) protein is Putative membrane protein insertion efficiency factor.